Reading from the N-terminus, the 326-residue chain is Acyl-CoA-binding domain-containing protein 4 (326 aa).

The region spanning 10 to 99 (CQKQFQAAVS…MKLVAQKVID (90 aa)) is the ACB domain. An acyl-CoA is bound by residues 21–30 (IQNLPKNGSY), 41–45 (YSYYK), lysine 67, and tyrosine 86. Disordered regions lie at residues 147-170 (VQAAPEPSHPPKEPAPPSPESRLP) and 223-248 (KEAAGRELTTRSSPESPEGFGGSLMG). Serine 164 carries the post-translational modification Phosphoserine.

Its function is as follows. Binds medium- and long-chain acyl-CoA esters and may function as an intracellular carrier of acyl-CoA esters. In Rattus norvegicus (Rat), this protein is Acyl-CoA-binding domain-containing protein 4 (Acbd4).